The sequence spans 310 residues: Ribosomal RNA small subunit methyltransferase H (310 aa).

Residues 33-35 (GGH), aspartate 52, phenylalanine 79, aspartate 98, and glutamine 105 contribute to the S-adenosyl-L-methionine site.

It belongs to the methyltransferase superfamily. RsmH family.

It is found in the cytoplasm. The enzyme catalyses cytidine(1402) in 16S rRNA + S-adenosyl-L-methionine = N(4)-methylcytidine(1402) in 16S rRNA + S-adenosyl-L-homocysteine + H(+). In terms of biological role, specifically methylates the N4 position of cytidine in position 1402 (C1402) of 16S rRNA. The sequence is that of Ribosomal RNA small subunit methyltransferase H from Campylobacter jejuni subsp. doylei (strain ATCC BAA-1458 / RM4099 / 269.97).